A 173-amino-acid polypeptide reads, in one-letter code: Large ribosomal subunit protein uL10 (173 aa).

This sequence belongs to the universal ribosomal protein uL10 family. As to quaternary structure, part of the ribosomal stalk of the 50S ribosomal subunit. The N-terminus interacts with L11 and the large rRNA to form the base of the stalk. The C-terminus forms an elongated spine to which L12 dimers bind in a sequential fashion forming a multimeric L10(L12)X complex.

Functionally, forms part of the ribosomal stalk, playing a central role in the interaction of the ribosome with GTP-bound translation factors. The protein is Large ribosomal subunit protein uL10 of Cupriavidus metallidurans (strain ATCC 43123 / DSM 2839 / NBRC 102507 / CH34) (Ralstonia metallidurans).